The following is a 167-amino-acid chain: Photosystem I assembly protein Ycf3 (167 aa).

TPR repeat units lie at residues 35-68, 72-105, and 120-153; these read AFTYYRDGMSAQSEGEYAEALQNYYEAMRLEIDP, SYILYNIGLIHTSNGEHAKAIEYYLQALERNPSL, and GEQAVEKEDLETSEAWFDQAADYWKQAIALAPNN.

The protein belongs to the Ycf3 family.

Its subcellular location is the plastid. It localises to the chloroplast thylakoid membrane. Functionally, essential for the assembly of the photosystem I (PSI) complex. May act as a chaperone-like factor to guide the assembly of the PSI subunits. The protein is Photosystem I assembly protein Ycf3 of Zygnema circumcarinatum (Green alga).